The sequence spans 274 residues: 4-diphosphocytidyl-2-C-methyl-D-erythritol kinase (274 aa).

Lys8 is an active-site residue. Residue 92–102 (PSGAGLGGGSS) coordinates ATP. Asp134 is an active-site residue.

Belongs to the GHMP kinase family. IspE subfamily.

It carries out the reaction 4-CDP-2-C-methyl-D-erythritol + ATP = 4-CDP-2-C-methyl-D-erythritol 2-phosphate + ADP + H(+). Its pathway is isoprenoid biosynthesis; isopentenyl diphosphate biosynthesis via DXP pathway; isopentenyl diphosphate from 1-deoxy-D-xylulose 5-phosphate: step 3/6. Functionally, catalyzes the phosphorylation of the position 2 hydroxy group of 4-diphosphocytidyl-2C-methyl-D-erythritol. The sequence is that of 4-diphosphocytidyl-2-C-methyl-D-erythritol kinase from Porphyromonas gingivalis (strain ATCC 33277 / DSM 20709 / CIP 103683 / JCM 12257 / NCTC 11834 / 2561).